The chain runs to 229 residues: Heptaprenylglyceryl phosphate synthase (229 aa).

Lysine 12 is a binding site for sn-glycerol 1-phosphate. Residues aspartate 14 and threonine 40 each contribute to the Mg(2+) site. Residues 159–164 (YIEYSG), glycine 189, and 209–210 (GN) each bind sn-glycerol 1-phosphate.

Belongs to the GGGP/HepGP synthase family. Group I subfamily. As to quaternary structure, homodimer. Mg(2+) serves as cofactor.

It catalyses the reaction sn-glycerol 1-phosphate + all-trans-heptaprenyl diphosphate = 3-heptaprenyl-sn-glycero-1-phosphate + diphosphate. The protein operates within membrane lipid metabolism; glycerophospholipid metabolism. Its function is as follows. Prenyltransferase that catalyzes in vivo the transfer of the heptaprenyl moiety of heptaprenyl pyrophosphate (HepPP; 35 carbon atoms) to the C3 hydroxyl of sn-glycerol-1-phosphate (G1P), producing heptaprenylglyceryl phosphate (HepGP). This reaction is an ether-bond-formation step in the biosynthesis of archaea-type G1P-based membrane lipids found in Bacillales. In Staphylococcus saprophyticus subsp. saprophyticus (strain ATCC 15305 / DSM 20229 / NCIMB 8711 / NCTC 7292 / S-41), this protein is Heptaprenylglyceryl phosphate synthase.